The primary structure comprises 204 residues: Ras-related protein Rab-7L1 (204 aa).

GTP-binding residues include serine 33, lysine 34, histidine 35, tyrosine 36, lysine 37, and threonine 39. The short motif at 36-44 (YKSTVGVDF) is the Effector region element. Threonine 71 carries the post-translational modification Phosphothreonine; by LRRK2. A Phosphoserine modification is found at serine 72. Lysine 126, valine 156, and lysine 157 together coordinate GTP. 2 S-geranylgeranyl cysteine lipidation sites follow: cysteine 203 and cysteine 204.

Belongs to the small GTPase superfamily. Rab family. Interacts with LRRK2 (via the N-terminus); this interaction is direct and stimulates kinase activity. Expressed predominantly in kidney and much less in brain, heart, muscle, fat, liver, spleen, adrenal gland, ovary, thymus and lung. Not expressed in testis and intestine.

The protein resides in the cell membrane. It is found in the cytoplasm. The protein localises to the perinuclear region. Its subcellular location is the golgi apparatus. It localises to the golgi apparatus membrane. The protein resides in the trans-Golgi network. It is found in the cytoskeleton. In terms of biological role, the small GTPases Rab are key regulators in vesicle trafficking. Essential for maintaining the integrity of endosome-trans-Golgi network structure. Together with LRRK2, plays a role in the retrograde trafficking pathway for recycling proteins, such as mannose 6 phosphate receptor (M6PR), between lysosomes and the Golgi apparatus in a retromer-dependent manner. Recruits LRRK2 to the Golgi apparatus and stimulates LRRK2 kinase activity. Stimulates phosphorylation of RAB10 'Thr-73' by LRRK2. Regulates also neuronal process morphology in the intact central nervous system (CNS). The protein is Ras-related protein Rab-7L1 (Rab29) of Rattus norvegicus (Rat).